The sequence spans 320 residues: UDP-N-acetylenolpyruvoylglucosamine reductase (320 aa).

In terms of domain architecture, FAD-binding PCMH-type spans 34–200 (RAGGLAEVFF…TSAVFEGFAE (167 aa)). Arg180 is a catalytic residue. Ser229 (proton donor) is an active-site residue. Glu299 is a catalytic residue.

It belongs to the MurB family. The cofactor is FAD.

Its subcellular location is the cytoplasm. It carries out the reaction UDP-N-acetyl-alpha-D-muramate + NADP(+) = UDP-N-acetyl-3-O-(1-carboxyvinyl)-alpha-D-glucosamine + NADPH + H(+). The protein operates within cell wall biogenesis; peptidoglycan biosynthesis. Cell wall formation. In Mesorhizobium japonicum (strain LMG 29417 / CECT 9101 / MAFF 303099) (Mesorhizobium loti (strain MAFF 303099)), this protein is UDP-N-acetylenolpyruvoylglucosamine reductase.